A 130-amino-acid chain; its full sequence is Large ribosomal subunit protein bL12 (130 aa).

The protein belongs to the bacterial ribosomal protein bL12 family. In terms of assembly, homodimer. Part of the ribosomal stalk of the 50S ribosomal subunit. Forms a multimeric L10(L12)X complex, where L10 forms an elongated spine to which 2 to 4 L12 dimers bind in a sequential fashion. Binds GTP-bound translation factors.

Forms part of the ribosomal stalk which helps the ribosome interact with GTP-bound translation factors. Is thus essential for accurate translation. The protein is Large ribosomal subunit protein bL12 of Parafrankia sp. (strain EAN1pec).